The primary structure comprises 467 residues: Zinc finger protein ZIC 3 (467 aa).

The segment at 66–107 (LSSGQSSAFTPQGSGYANALGHHHHHHHHHHHTSQVPSYGGA) is disordered. Over residues 67-80 (SSGQSSAFTPQGSG) the composition is skewed to polar residues. Residues 86–98 (GHHHHHHHHHHHT) are compositionally biased toward basic residues. Lysine 248 is covalently cross-linked (Glycyl lysine isopeptide (Lys-Gly) (interchain with G-Cter in SUMO2)). A C2H2-type 1; atypical zinc finger spans residues 251–286 (LSCKWIDEAQLSRPKKSCDRTFSTMHELVTHVTMEH). The segment at 295-322 (HVCYWEECPREGKSFKAKYKLVNHIRVH) adopts a C2H2-type 2; atypical zinc-finger fold. 2 short sequence motifs (nuclear localization signal) span residues 297 to 322 (CYWE…IRVH) and 330 to 352 (CPFP…KRTH). C2H2-type zinc fingers lie at residues 328 to 352 (FPCP…KRTH), 358 to 382 (FKCE…MHVH), and 388 to 410 (YICK…MKVH). The tract at residues 404–467 (RKHMKVHESQ…LPPNFNEWYV (64 aa)) is disordered. The span at 412-428 (SQGSDSSPAASSGYESS) shows a compositional bias: low complexity. Residues 435–455 (SANSKDTTKTPSAVQTSTSHN) are compositionally biased toward polar residues.

The protein belongs to the GLI C2H2-type zinc-finger protein family. As to quaternary structure, interacts (via the C2H2-type domains 3, 4 and 5) with MDFIC (via the C2H2-type domains 3, 4 and 5); the interaction reduces its transcriptional activity. Interacts with KPNA1 and KPNA6. Interacts (via C2H2-type domains 3, 4 and 5) with GLI3; the interaction enhances its transcriptional activity.

The protein resides in the nucleus. It localises to the cytoplasm. In terms of biological role, acts as a transcriptional activator. Required in the earliest stages in both axial midline development and left-right (LR) asymmetry specification. Binds to the minimal GLI-consensus sequence 5'-GGGTGGTC-3'. This Homo sapiens (Human) protein is Zinc finger protein ZIC 3 (ZIC3).